The chain runs to 544 residues: 4-coumarate--CoA ligase 2 (544 aa).

Residues serine 190, serine 191, glycine 192, threonine 193, threonine 194, and lysine 198 each coordinate ATP. Tyrosine 240 lines the (E)-4-coumaroyl-AMP pocket. CoA is bound at residue lysine 261. The interval 263 to 332 (DIVPFLELIQ…AKFPNAKLGQ (70 aa)) is SBD1. Residues alanine 310, glutamine 332, glycine 333, threonine 337, and methionine 345 each coordinate (E)-4-coumaroyl-AMP. Residues glutamine 332, glycine 333, and threonine 337 each coordinate ATP. The tract at residues 333 to 400 (GYGMTEAGPV…IRGDQIMKGY (68 aa)) is SBD2. Residues aspartate 421 and arginine 436 each contribute to the ATP site. Residues lysine 438 and lysine 442 each contribute to the (E)-4-coumaroyl-AMP site. Residues lysine 444 and glycine 445 each contribute to the CoA site. Lysine 527 contacts ATP.

This sequence belongs to the ATP-dependent AMP-binding enzyme family. Requires Mg(2+) as cofactor.

The enzyme catalyses (E)-4-coumarate + ATP + CoA = (E)-4-coumaroyl-CoA + AMP + diphosphate. It carries out the reaction (E)-4-coumarate + ATP + H(+) = (E)-4-coumaroyl-AMP + diphosphate. It catalyses the reaction (E)-4-coumaroyl-AMP + CoA = (E)-4-coumaroyl-CoA + AMP + H(+). It functions in the pathway phytoalexin biosynthesis; 3,4',5-trihydroxystilbene biosynthesis; 3,4',5-trihydroxystilbene from trans-4-coumarate: step 1/2. In terms of biological role, carboxylate--CoA ligase that may use 4-coumarate as substrate. Follows a two-step reaction mechanism, wherein the carboxylate substrate first undergoes adenylation by ATP, followed by a thioesterification in the presence of CoA to yield the final CoA thioester. This chain is 4-coumarate--CoA ligase 2 (4CL2), found in Petroselinum crispum (Parsley).